Here is a 525-residue protein sequence, read N- to C-terminus: Probable lipid II flippase MurJ (525 aa).

A run of 14 helical transmembrane segments spans residues 10 to 30 (LLKSGIIVSAMTLISRVLGLV), 32 to 52 (DVVVANLMGAGASADVFFFAN), 100 to 120 (VLVTIVTLIGVLGSGAVTALF), 140 to 160 (LASLLLKITFPYLWFITFVAL), 171 to 191 (FAVSSFTPVFLNVMMILCAWY), 203 to 223 (LAIGVFLGGLVQFLFQLPFLI), 247 to 267 (MIPALFGVSVSQINLLFDSFV), 285 to 305 (LLEFPLGLFGIAIATVILPAL), 330 to 350 (FLGIPAMLGLMVLAKPMLMVL), 368 to 388 (LLAYSSGLLSFMLIKVLAPGY), 402 to 422 (IIAMVSNIVLNAIFAWFYGYV), 423 to 443 (GLAVATSMSAFLNMALLYRGL), 455 to 475 (TVWFVARLAMAGAVMTGALLW), and 495 to 515 (LTGLIGLGVASYLAILLLLGV).

This sequence belongs to the MurJ/MviN family.

The protein resides in the cell inner membrane. Its pathway is cell wall biogenesis; peptidoglycan biosynthesis. Involved in peptidoglycan biosynthesis. Transports lipid-linked peptidoglycan precursors from the inner to the outer leaflet of the cytoplasmic membrane. The polypeptide is Probable lipid II flippase MurJ (Vibrio cholerae serotype O1 (strain ATCC 39315 / El Tor Inaba N16961)).